The following is a 112-amino-acid chain: DNA-binding protein PF1087 (112 aa).

This sequence belongs to the PDCD5 family.

This Pyrococcus furiosus (strain ATCC 43587 / DSM 3638 / JCM 8422 / Vc1) protein is DNA-binding protein PF1087.